We begin with the raw amino-acid sequence, 225 residues long: Ribosome maturation factor RimM (225 aa).

Residues 144-225 (ADEFYWVDLI…RIVVDWEADY (82 aa)) enclose the PRC barrel domain.

It belongs to the RimM family. In terms of assembly, binds ribosomal protein uS19.

The protein resides in the cytoplasm. Functionally, an accessory protein needed during the final step in the assembly of 30S ribosomal subunit, possibly for assembly of the head region. Essential for efficient processing of 16S rRNA. May be needed both before and after RbfA during the maturation of 16S rRNA. It has affinity for free ribosomal 30S subunits but not for 70S ribosomes. This chain is Ribosome maturation factor RimM, found in Burkholderia ambifaria (strain MC40-6).